The primary structure comprises 86 residues: Protein E7 (86 aa).

Residues 1–37 (MHGPHPTVKDIELSLAPEDIPVCNVQLDEEDYTDAVE) are E7 terminal domain. A zinc finger spans residues 49–85 (CTKCSLPLRLVVECSHADIRALEQLLLGTLKLVCPRC). The Nuclear export signal signature appears at 67 to 75 (IRALEQLLL).

The protein belongs to the papillomaviridae E7 protein family. Homodimer. Homooligomer. Interacts with host RB1; this interaction induces dissociation of RB1-E2F1 complex thereby disrupting RB1 activity. Interacts with host EP300; this interaction represses EP300 transcriptional activity. Interacts with protein E2; this interaction inhibits E7 oncogenic activity. Interacts with host TMEM173/STING; this interaction impairs the ability of TMEM173/STING to sense cytosolic DNA and promote the production of type I interferon (IFN-alpha and IFN-beta). Highly phosphorylated.

It is found in the host cytoplasm. Its subcellular location is the host nucleus. Functionally, plays a role in viral genome replication by driving entry of quiescent cells into the cell cycle. Stimulation of progression from G1 to S phase allows the virus to efficiently use the cellular DNA replicating machinery to achieve viral genome replication. E7 protein has both transforming and trans-activating activities. Induces the disassembly of the E2F1 transcription factor from RB1, with subsequent transcriptional activation of E2F1-regulated S-phase genes. Interferes with host histone deacetylation mediated by HDAC1 and HDAC2, leading to transcription activation. Also plays a role in the inhibition of both antiviral and antiproliferative functions of host interferon alpha. Interaction with host TMEM173/STING impairs the ability of TMEM173/STING to sense cytosolic DNA and promote the production of type I interferon (IFN-alpha and IFN-beta). The chain is Protein E7 from Homo sapiens (Human).